A 505-amino-acid polypeptide reads, in one-letter code: Maturase K (505 aa).

It belongs to the intron maturase 2 family. MatK subfamily.

It is found in the plastid. The protein localises to the chloroplast. Its function is as follows. Usually encoded in the trnK tRNA gene intron. Probably assists in splicing its own and other chloroplast group II introns. This Morus indica (Mulberry) protein is Maturase K.